Reading from the N-terminus, the 380-residue chain is 3-isopropylmalate dehydrogenase (380 aa).

Residue 79-90 (GPEWAGVHPTPE) participates in NAD(+) binding. Substrate contacts are provided by arginine 97, arginine 107, arginine 136, and aspartate 229. The Mg(2+) site is built by aspartate 229, aspartate 254, and aspartate 258. 294–306 (GSAPDISGKGLAN) is a binding site for NAD(+).

Belongs to the isocitrate and isopropylmalate dehydrogenases family. Homodimer. Mg(2+) is required as a cofactor. It depends on Mn(2+) as a cofactor.

It is found in the cytoplasm. The enzyme catalyses (2R,3S)-3-isopropylmalate + NAD(+) = 4-methyl-2-oxopentanoate + CO2 + NADH. It functions in the pathway amino-acid biosynthesis; L-leucine biosynthesis; L-leucine from 3-methyl-2-oxobutanoate: step 3/4. In terms of biological role, catalyzes the oxidation of 3-carboxy-2-hydroxy-4-methylpentanoate (3-isopropylmalate) to 3-carboxy-4-methyl-2-oxopentanoate. The product decarboxylates to 4-methyl-2 oxopentanoate. The protein is 3-isopropylmalate dehydrogenase (LEU2) of Hapsidospora chrysogena (Acremonium chrysogenum).